The following is a 125-amino-acid chain: Fluoride-specific ion channel FluC (125 aa).

Helical transmembrane passes span phenylalanine 3–valine 23, isoleucine 33–phenylalanine 53, phenylalanine 65–tyrosine 85, and leucine 99–leucine 119. Na(+) is bound by residues glycine 75 and threonine 78.

It belongs to the fluoride channel Fluc/FEX (TC 1.A.43) family.

Its subcellular location is the cell inner membrane. It catalyses the reaction fluoride(in) = fluoride(out). With respect to regulation, na(+) is not transported, but it plays an essential structural role and its presence is essential for fluoride channel function. Its function is as follows. Fluoride-specific ion channel. Important for reducing fluoride concentration in the cell, thus reducing its toxicity. This is Fluoride-specific ion channel FluC from Thermosipho melanesiensis (strain DSM 12029 / CIP 104789 / BI429).